A 362-amino-acid chain; its full sequence is Chorismate synthase (362 aa).

Arg-47 lines the NADP(+) pocket. FMN contacts are provided by residues 124–126 (RSS), Gly-286, 301–305 (KPTAT), and Arg-327.

Belongs to the chorismate synthase family. Homotetramer. It depends on FMNH2 as a cofactor.

The enzyme catalyses 5-O-(1-carboxyvinyl)-3-phosphoshikimate = chorismate + phosphate. The protein operates within metabolic intermediate biosynthesis; chorismate biosynthesis; chorismate from D-erythrose 4-phosphate and phosphoenolpyruvate: step 7/7. In terms of biological role, catalyzes the anti-1,4-elimination of the C-3 phosphate and the C-6 proR hydrogen from 5-enolpyruvylshikimate-3-phosphate (EPSP) to yield chorismate, which is the branch point compound that serves as the starting substrate for the three terminal pathways of aromatic amino acid biosynthesis. This reaction introduces a second double bond into the aromatic ring system. The protein is Chorismate synthase of Rippkaea orientalis (strain PCC 8801 / RF-1) (Cyanothece sp. (strain PCC 8801)).